Consider the following 218-residue polypeptide: Protein THO1 (218 aa).

An SAP domain is found at 4-38 (YSSLTVVQLKDLLTKRNLSVGGLKNELVQRLIKDD). Serine 22 is subject to Phosphoserine. Disordered regions lie at residues 37–123 (DDEE…LSPE) and 177–218 (LVSR…GYRR). Residues 47–57 (VSPQEQNQEQG) show a composition bias toward polar residues. Residues serine 58 and serine 68 each carry the phosphoserine modification. Positions 72 to 96 (TEKKEVSSEPKETNEPKEENKDVQK) are enriched in basic and acidic residues. Composition is skewed to low complexity over residues 102-122 (SATASENEQAAASTAAPALSP) and 186-203 (SGNNGKFKNRNKNANNRS). A compositionally biased stretch (basic residues) spans 204 to 218 (RVSKNRRGNRSGYRR).

This sequence belongs to the SAP domain-containing ribonucleoprotein family. As to quaternary structure, interacts with SUB2 in the presence of RNA; this interaction facilitates RNA binding of SUB2.

Functionally, facilitates RNA binding of SUB2 and likely plays a role in mRNA export. Suppressor of the transcriptional defect of HPR1 by overexpression. In Saccharomyces cerevisiae (strain ATCC 204508 / S288c) (Baker's yeast), this protein is Protein THO1 (THO1).